Consider the following 521-residue polypeptide: Methionine--tRNA ligase (521 aa).

Residues 14–24 (YYSSGNPHIGH) carry the 'HIGH' region motif. Zn(2+) contacts are provided by Cys129, Cys132, Cys151, and His155. The 'KMSKS' region signature appears at 306 to 310 (KMSKS). Lys309 contacts ATP.

It belongs to the class-I aminoacyl-tRNA synthetase family. MetG type 2A subfamily. As to quaternary structure, monomer. It depends on Zn(2+) as a cofactor.

The protein localises to the cytoplasm. The catalysed reaction is tRNA(Met) + L-methionine + ATP = L-methionyl-tRNA(Met) + AMP + diphosphate. Its function is as follows. Is required not only for elongation of protein synthesis but also for the initiation of all mRNA translation through initiator tRNA(fMet) aminoacylation. This Ureaplasma parvum serovar 3 (strain ATCC 700970) protein is Methionine--tRNA ligase.